Reading from the N-terminus, the 185-residue chain is Ribosome-recycling factor (185 aa).

This sequence belongs to the RRF family.

The protein localises to the cytoplasm. Responsible for the release of ribosomes from messenger RNA at the termination of protein biosynthesis. May increase the efficiency of translation by recycling ribosomes from one round of translation to another. In Clostridium beijerinckii (strain ATCC 51743 / NCIMB 8052) (Clostridium acetobutylicum), this protein is Ribosome-recycling factor.